Consider the following 1200-residue polypeptide: Nuclear pore complex protein Nup133 (1200 aa).

Residues 1 to 28 (MERNLQKQLYGISRESSPGARRYSMPAA) are disordered.

It belongs to the nucleoporin Nup133 family. Forms part of the Nup107-Nup160 subcomplex in the nuclear pore.

Its subcellular location is the nucleus. It localises to the nuclear pore complex. Its function is as follows. Probable component of the nuclear pore complex (NPC). Plays a role in NPC assembly and/or maintenance. The polypeptide is Nuclear pore complex protein Nup133 (Drosophila melanogaster (Fruit fly)).